A 692-amino-acid polypeptide reads, in one-letter code: Peroxisomal primary amine oxidase (692 aa).

Residues methionine 1 to alanine 22 show a composition bias toward low complexity. The disordered stretch occupies residues methionine 1–aspartate 26. N-linked (GlcNAc...) asparagine glycosylation is present at asparagine 243. Alanine 317–methionine 328 contacts substrate. Aspartate 319 functions as the Proton acceptor in the catalytic mechanism. A disulfide bond links cysteine 338 and cysteine 364. Alanine 402–tyrosine 407 is a substrate binding site. Catalysis depends on tyrosine 405, which acts as the Schiff-base intermediate with substrate; via topaquinone. Tyrosine 405 carries the post-translational modification 2',4',5'-topaquinone. Cu cation-binding residues include histidine 456 and histidine 458. Mn(2+)-binding residues include aspartate 465, aspartate 613, and isoleucine 614. Histidine 624 contributes to the Cu cation binding site.

Belongs to the copper/topaquinone oxidase family. Homodimer. Cu cation is required as a cofactor. It depends on Zn(2+) as a cofactor. The cofactor is L-topaquinone. Mn(2+) serves as cofactor. Topaquinone (TPQ) is generated by copper-dependent autoxidation of a specific tyrosyl residue.

The protein localises to the peroxisome. It carries out the reaction a primary methyl amine + O2 + H2O = an aldehyde + H2O2 + NH4(+). This chain is Peroxisomal primary amine oxidase (AMO), found in Pichia angusta (Yeast).